The primary structure comprises 199 residues: Protein GrpE (199 aa).

A compositionally biased stretch (polar residues) spans 1–17; it reads MSDSDNNTKSQQNNPTQ. A disordered region spans residues 1–36; the sequence is MSDSDNNTKSQQNNPTQTDEKSGEEIQSNQKPQRKF.

Belongs to the GrpE family. In terms of assembly, homodimer.

It is found in the cytoplasm. Its function is as follows. Participates actively in the response to hyperosmotic and heat shock by preventing the aggregation of stress-denatured proteins, in association with DnaK and GrpE. It is the nucleotide exchange factor for DnaK and may function as a thermosensor. Unfolded proteins bind initially to DnaJ; upon interaction with the DnaJ-bound protein, DnaK hydrolyzes its bound ATP, resulting in the formation of a stable complex. GrpE releases ADP from DnaK; ATP binding to DnaK triggers the release of the substrate protein, thus completing the reaction cycle. Several rounds of ATP-dependent interactions between DnaJ, DnaK and GrpE are required for fully efficient folding. The protein is Protein GrpE of Ehrlichia canis (strain Jake).